The primary structure comprises 303 residues: Deoxyhypusine hydroxylase (303 aa).

HEAT-like PBS-type repeat units follow at residues 56 to 82 (LKHELAYCLGQMKDRRALPVLKQVLQD) and 89 to 115 (VRHEAGEALGAIGDPEVLELLREYAQD). Fe cation is bound by residues H58, H91, and E92. The interval 139–158 (DSPDTNPYLSVDPAPPAEEK) is disordered. 3 HEAT-like PBS-type repeats span residues 176–202 (HRYRAMFALRNIGGEEAVLALADGLQI), 207–233 (FRHEIGYVLGQMQHKAAVPGLSAALER), and 240–266 (VRHECAEALGSIAHEDCLKALRAHVGD). Residues H209, H242, and E243 each contribute to the Fe cation site.

Belongs to the deoxyhypusine hydroxylase family. Fe(2+) serves as cofactor.

It catalyses the reaction [eIF5A protein]-deoxyhypusine + AH2 + O2 = [eIF5A protein]-hypusine + A + H2O. It functions in the pathway protein modification; eIF5A hypusination. In terms of biological role, catalyzes the hydroxylation of the N(6)-(4-aminobutyl)-L-lysine intermediate produced by deoxyhypusine synthase/DHPS on a critical lysine of the eukaryotic translation initiation factor 5A/eIF-5A. This is the second step of the post-translational modification of that lysine into an unusual amino acid residue named hypusine. Hypusination is unique to mature eIF-5A factor and is essential for its function. The protein is Deoxyhypusine hydroxylase (dohh) of Xenopus laevis (African clawed frog).